We begin with the raw amino-acid sequence, 269 residues long: Phosphate import ATP-binding protein PstB (269 aa).

Positions 22-264 constitute an ABC transporter domain; it reads AEVRDLNFYY…PVQQKTADYV (243 aa). Residue 54-61 participates in ATP binding; the sequence is GPSGCGKT.

It belongs to the ABC transporter superfamily. Phosphate importer (TC 3.A.1.7) family. The complex is composed of two ATP-binding proteins (PstB), two transmembrane proteins (PstC and PstA) and a solute-binding protein (PstS).

The protein resides in the cell inner membrane. The enzyme catalyses phosphate(out) + ATP + H2O = ADP + 2 phosphate(in) + H(+). Part of the ABC transporter complex PstSACB involved in phosphate import. Responsible for energy coupling to the transport system. This chain is Phosphate import ATP-binding protein PstB, found in Thermosynechococcus vestitus (strain NIES-2133 / IAM M-273 / BP-1).